The primary structure comprises 281 residues: 4-deoxy-L-threo-5-hexosulose-uronate ketol-isomerase (281 aa).

Zn(2+) is bound by residues histidine 198, histidine 200, glutamate 205, and histidine 248.

This sequence belongs to the KduI family. Zn(2+) serves as cofactor.

It carries out the reaction 5-dehydro-4-deoxy-D-glucuronate = 3-deoxy-D-glycero-2,5-hexodiulosonate. The protein operates within glycan metabolism; pectin degradation; 2-dehydro-3-deoxy-D-gluconate from pectin: step 4/5. Catalyzes the isomerization of 5-dehydro-4-deoxy-D-glucuronate to 3-deoxy-D-glycero-2,5-hexodiulosonate. This chain is 4-deoxy-L-threo-5-hexosulose-uronate ketol-isomerase, found in Lacticaseibacillus casei (strain BL23) (Lactobacillus casei).